A 496-amino-acid chain; its full sequence is Glycerol kinase (496 aa).

ADP is bound at residue Thr-12. ATP is bound by residues Thr-12, Thr-13, and Ser-14. Thr-12 lines the sn-glycerol 3-phosphate pocket. ADP is bound at residue Arg-16. Sn-glycerol 3-phosphate is bound by residues Arg-82, Glu-83, and Tyr-134. Residues Arg-82, Glu-83, and Tyr-134 each coordinate glycerol. His-230 carries the post-translational modification Phosphohistidine; by HPr. Residue Asp-244 participates in sn-glycerol 3-phosphate binding. 2 residues coordinate glycerol: Asp-244 and Gln-245. Positions 266 and 309 each coordinate ADP. 4 residues coordinate ATP: Thr-266, Gly-309, Gln-313, and Gly-410. Residues Gly-410 and Asn-414 each contribute to the ADP site.

Belongs to the FGGY kinase family. The phosphoenolpyruvate-dependent sugar phosphotransferase system (PTS), including enzyme I, and histidine-containing protein (HPr) are required for the phosphorylation of, which leads to the activation of the enzyme.

It carries out the reaction glycerol + ATP = sn-glycerol 3-phosphate + ADP + H(+). It functions in the pathway polyol metabolism; glycerol degradation via glycerol kinase pathway; sn-glycerol 3-phosphate from glycerol: step 1/1. Its activity is regulated as follows. Inhibited by fructose 1,6-bisphosphate and p-chloromercuribenzoate (PCMB). Key enzyme in the regulation of glycerol uptake and metabolism. Catalyzes the phosphorylation of glycerol to yield sn-glycerol 3-phosphate. The polypeptide is Glycerol kinase (Thermus thermophilus).